Here is a 384-residue protein sequence, read N- to C-terminus: Galactokinase (384 aa).

Residue 35–38 (EHTD) coordinates substrate. ATP is bound by residues S69 and 125–131 (GAGLSSS). Residues S131 and E163 each coordinate Mg(2+). Catalysis depends on D175, which acts as the Proton acceptor. Y224 provides a ligand contact to substrate.

The protein belongs to the GHMP kinase family. GalK subfamily.

The protein resides in the cytoplasm. It carries out the reaction alpha-D-galactose + ATP = alpha-D-galactose 1-phosphate + ADP + H(+). It functions in the pathway carbohydrate metabolism; galactose metabolism. Its function is as follows. Catalyzes the transfer of the gamma-phosphate of ATP to D-galactose to form alpha-D-galactose-1-phosphate (Gal-1-P). The polypeptide is Galactokinase (Aliivibrio fischeri (strain MJ11) (Vibrio fischeri)).